Consider the following 680-residue polypeptide: DNA-directed RNA polymerase subunit beta' (680 aa).

Zn(2+) is bound by residues cysteine 69, cysteine 71, cysteine 87, and cysteine 90. Mg(2+)-binding residues include aspartate 489, aspartate 491, and aspartate 493.

The protein belongs to the RNA polymerase beta' chain family. RpoC1 subfamily. In plastids the minimal PEP RNA polymerase catalytic core is composed of four subunits: alpha, beta, beta', and beta''. When a (nuclear-encoded) sigma factor is associated with the core the holoenzyme is formed, which can initiate transcription. Mg(2+) is required as a cofactor. Zn(2+) serves as cofactor.

The protein localises to the plastid. It localises to the chloroplast. It carries out the reaction RNA(n) + a ribonucleoside 5'-triphosphate = RNA(n+1) + diphosphate. In terms of biological role, DNA-dependent RNA polymerase catalyzes the transcription of DNA into RNA using the four ribonucleoside triphosphates as substrates. This chain is DNA-directed RNA polymerase subunit beta', found in Citrus sinensis (Sweet orange).